The chain runs to 324 residues: Phospho-N-acetylmuramoyl-pentapeptide-transferase (324 aa).

10 helical membrane-spanning segments follow: residues 5–25, 52–72, 76–96, 117–137, 147–167, 176–196, 203–223, 227–247, 250–270, and 302–322; these read IIVI…PLFI, PTMG…WVTA, VLSA…VLGF, FIGQ…SGFS, WSFD…VGGS, LDGL…VLAW, VAVF…FNAH, VFMG…VAVL, LELL…SVII, and IVVT…YIEV.

The protein belongs to the glycosyltransferase 4 family. MraY subfamily. Mg(2+) is required as a cofactor.

It localises to the cell membrane. It carries out the reaction UDP-N-acetyl-alpha-D-muramoyl-L-alanyl-gamma-D-glutamyl-meso-2,6-diaminopimeloyl-D-alanyl-D-alanine + di-trans,octa-cis-undecaprenyl phosphate = di-trans,octa-cis-undecaprenyl diphospho-N-acetyl-alpha-D-muramoyl-L-alanyl-D-glutamyl-meso-2,6-diaminopimeloyl-D-alanyl-D-alanine + UMP. It functions in the pathway cell wall biogenesis; peptidoglycan biosynthesis. Its function is as follows. Catalyzes the initial step of the lipid cycle reactions in the biosynthesis of the cell wall peptidoglycan: transfers peptidoglycan precursor phospho-MurNAc-pentapeptide from UDP-MurNAc-pentapeptide onto the lipid carrier undecaprenyl phosphate, yielding undecaprenyl-pyrophosphoryl-MurNAc-pentapeptide, known as lipid I. The polypeptide is Phospho-N-acetylmuramoyl-pentapeptide-transferase (Geobacillus thermodenitrificans (strain NG80-2)).